Reading from the N-terminus, the 479-residue chain is Adenosylhomocysteinase (479 aa).

Residues threonine 65, aspartate 145, and glutamate 205 each coordinate substrate. 206-208 provides a ligand contact to NAD(+); that stretch reads TTT. Substrate contacts are provided by lysine 235 and aspartate 239. Residues asparagine 240, 269-274, glutamate 292, asparagine 327, 348-350, and asparagine 393 contribute to the NAD(+) site; these read GYGDVG and IGH.

It belongs to the adenosylhomocysteinase family. NAD(+) is required as a cofactor.

The protein localises to the cytoplasm. The catalysed reaction is S-adenosyl-L-homocysteine + H2O = L-homocysteine + adenosine. It functions in the pathway amino-acid biosynthesis; L-homocysteine biosynthesis; L-homocysteine from S-adenosyl-L-homocysteine: step 1/1. In terms of biological role, may play a key role in the regulation of the intracellular concentration of adenosylhomocysteine. This is Adenosylhomocysteinase from Janthinobacterium sp. (strain Marseille) (Minibacterium massiliensis).